A 669-amino-acid polypeptide reads, in one-letter code: DNA ligase (669 aa).

Residues 34 to 38 (DAEYD), 83 to 84 (SL), and Glu114 each bind NAD(+). Lys116 acts as the N6-AMP-lysine intermediate in catalysis. The NAD(+) site is built by Arg137, Glu171, Lys287, and Lys311. Zn(2+) is bound by residues Cys405, Cys408, Cys423, and Cys428. Positions 591 to 669 (NVESYFAGKT…EERFLQELNK (79 aa)) constitute a BRCT domain.

It belongs to the NAD-dependent DNA ligase family. LigA subfamily. It depends on Mg(2+) as a cofactor. The cofactor is Mn(2+).

The catalysed reaction is NAD(+) + (deoxyribonucleotide)n-3'-hydroxyl + 5'-phospho-(deoxyribonucleotide)m = (deoxyribonucleotide)n+m + AMP + beta-nicotinamide D-nucleotide.. In terms of biological role, DNA ligase that catalyzes the formation of phosphodiester linkages between 5'-phosphoryl and 3'-hydroxyl groups in double-stranded DNA using NAD as a coenzyme and as the energy source for the reaction. It is essential for DNA replication and repair of damaged DNA. The protein is DNA ligase of Bacillus cereus (strain ATCC 10987 / NRS 248).